The following is a 211-amino-acid chain: Protein U63 (211 aa).

This sequence belongs to the herpesviridae UL92 family.

The sequence is that of Protein U63 (U63) from Human herpesvirus 7 (strain JI) (HHV-7).